The following is a 204-amino-acid chain: Thymidylate kinase (204 aa).

An ATP-binding site is contributed by 11 to 18; the sequence is GIDGAGKS.

This sequence belongs to the thymidylate kinase family.

The catalysed reaction is dTMP + ATP = dTDP + ADP. In terms of biological role, phosphorylation of dTMP to form dTDP in both de novo and salvage pathways of dTTP synthesis. The sequence is that of Thymidylate kinase from Janthinobacterium sp. (strain Marseille) (Minibacterium massiliensis).